Consider the following 717-residue polypeptide: Acetone carboxylase beta subunit (717 aa).

As to quaternary structure, heterohexamer of two alpha, two beta and two gamma subunits. Fe cation serves as cofactor. The cofactor is Mg(2+). Requires Zn(2+) as cofactor. The N-terminus is blocked.

The enzyme catalyses acetone + hydrogencarbonate + 2 ATP + 3 H2O = acetoacetate + 2 AMP + 4 phosphate + 4 H(+). Catalyzes the carboxylation of acetone to form acetoacetate. Has a reduced activity on butanone, and no activity on 2-pentatone, 3-pentatone, 2-hexanone, chloroacetone, pyruvate, phosphoenolpyruvate, acetaldehyde, propionaldehyde and propylene oxide. In Xanthobacter autotrophicus (strain ATCC BAA-1158 / Py2), this protein is Acetone carboxylase beta subunit.